Here is a 427-residue protein sequence, read N- to C-terminus: Enolase (427 aa).

Gln-163 provides a ligand contact to (2R)-2-phosphoglycerate. Glu-205 (proton donor) is an active-site residue. Mg(2+) is bound by residues Asp-242, Glu-285, and Asp-312. Positions 337, 366, 367, and 388 each coordinate (2R)-2-phosphoglycerate. Lys-337 acts as the Proton acceptor in catalysis.

This sequence belongs to the enolase family. Mg(2+) is required as a cofactor.

It localises to the cytoplasm. It is found in the secreted. The protein resides in the cell surface. The enzyme catalyses (2R)-2-phosphoglycerate = phosphoenolpyruvate + H2O. It functions in the pathway carbohydrate degradation; glycolysis; pyruvate from D-glyceraldehyde 3-phosphate: step 4/5. Functionally, catalyzes the reversible conversion of 2-phosphoglycerate (2-PG) into phosphoenolpyruvate (PEP). It is essential for the degradation of carbohydrates via glycolysis. The polypeptide is Enolase (Albidiferax ferrireducens (strain ATCC BAA-621 / DSM 15236 / T118) (Rhodoferax ferrireducens)).